A 239-amino-acid chain; its full sequence is Large ribosomal subunit protein uL2 (239 aa).

Residues 200 to 239 (VNHPHGGKEHHIGRPSTVSRRAPPGRKVGHIAARRTGRRK) form a disordered region. Over residues 222–239 (PPGRKVGHIAARRTGRRK) the composition is skewed to basic residues.

Belongs to the universal ribosomal protein uL2 family. In terms of assembly, part of the 50S ribosomal subunit. Forms a bridge to the 30S subunit in the 70S ribosome.

Its function is as follows. One of the primary rRNA binding proteins. Required for association of the 30S and 50S subunits to form the 70S ribosome, for tRNA binding and peptide bond formation. It has been suggested to have peptidyltransferase activity; this is somewhat controversial. Makes several contacts with the 16S rRNA in the 70S ribosome. The sequence is that of Large ribosomal subunit protein uL2 from Thermococcus onnurineus (strain NA1).